The following is a 595-amino-acid chain: Aspartate--tRNA(Asp/Asn) ligase (595 aa).

E177 is an L-aspartate binding site. Residues 201-204 (QQFK) are aspartate. R223 serves as a coordination point for L-aspartate. ATP contacts are provided by residues 223 to 225 (RDE) and Q232. H455 provides a ligand contact to L-aspartate. An ATP-binding site is contributed by E489. R496 contacts L-aspartate. 542–545 (GLDR) is an ATP binding site.

This sequence belongs to the class-II aminoacyl-tRNA synthetase family. Type 1 subfamily. As to quaternary structure, homodimer.

The protein localises to the cytoplasm. The enzyme catalyses tRNA(Asx) + L-aspartate + ATP = L-aspartyl-tRNA(Asx) + AMP + diphosphate. In terms of biological role, aspartyl-tRNA synthetase with relaxed tRNA specificity since it is able to aspartylate not only its cognate tRNA(Asp) but also tRNA(Asn). Reaction proceeds in two steps: L-aspartate is first activated by ATP to form Asp-AMP and then transferred to the acceptor end of tRNA(Asp/Asn). The polypeptide is Aspartate--tRNA(Asp/Asn) ligase (Opitutus terrae (strain DSM 11246 / JCM 15787 / PB90-1)).